Consider the following 592-residue polypeptide: UvrABC system protein C (592 aa).

One can recognise a GIY-YIG domain in the interval 14-91; it reads KKPGCYLWKN…IKKHKPRYNI (78 aa). A UVR domain is found at 197–232; the sequence is DQVLKDLKEKESIASEKFDFEQAKKYLDLQKAINLI.

The protein belongs to the UvrC family. Interacts with UvrB in an incision complex.

It is found in the cytoplasm. In terms of biological role, the UvrABC repair system catalyzes the recognition and processing of DNA lesions. UvrC both incises the 5' and 3' sides of the lesion. The N-terminal half is responsible for the 3' incision and the C-terminal half is responsible for the 5' incision. The sequence is that of UvrABC system protein C from Mycoplasmoides gallisepticum (strain R(low / passage 15 / clone 2)) (Mycoplasma gallisepticum).